A 118-amino-acid chain; its full sequence is Large ribosomal subunit protein uL22 (118 aa).

This sequence belongs to the universal ribosomal protein uL22 family. As to quaternary structure, part of the 50S ribosomal subunit.

Functionally, this protein binds specifically to 23S rRNA; its binding is stimulated by other ribosomal proteins, e.g. L4, L17, and L20. It is important during the early stages of 50S assembly. It makes multiple contacts with different domains of the 23S rRNA in the assembled 50S subunit and ribosome. The globular domain of the protein is located near the polypeptide exit tunnel on the outside of the subunit, while an extended beta-hairpin is found that lines the wall of the exit tunnel in the center of the 70S ribosome. The sequence is that of Large ribosomal subunit protein uL22 from Leuconostoc citreum (strain KM20).